Reading from the N-terminus, the 234-residue chain is Large ribosomal subunit protein uL1 (234 aa).

This sequence belongs to the universal ribosomal protein uL1 family. As to quaternary structure, part of the 50S ribosomal subunit.

Its function is as follows. Binds directly to 23S rRNA. The L1 stalk is quite mobile in the ribosome, and is involved in E site tRNA release. In terms of biological role, protein L1 is also a translational repressor protein, it controls the translation of the L11 operon by binding to its mRNA. In Anaeromyxobacter dehalogenans (strain 2CP-1 / ATCC BAA-258), this protein is Large ribosomal subunit protein uL1.